Reading from the N-terminus, the 141-residue chain is Large ribosomal subunit protein uL16 (141 aa).

Positions 1–23 are disordered; sequence MLMPKRTKYRKQMKGRNRGKAHR.

Belongs to the universal ribosomal protein uL16 family. As to quaternary structure, part of the 50S ribosomal subunit.

In terms of biological role, binds 23S rRNA and is also seen to make contacts with the A and possibly P site tRNAs. In Helicobacter acinonychis (strain Sheeba), this protein is Large ribosomal subunit protein uL16.